We begin with the raw amino-acid sequence, 1303 residues long: DNA-directed RNA polymerase subunit beta (1303 aa).

Belongs to the RNA polymerase beta chain family. In terms of assembly, the RNAP catalytic core consists of 2 alpha, 1 beta, 1 beta' and 1 omega subunit. When a sigma factor is associated with the core the holoenzyme is formed, which can initiate transcription.

It carries out the reaction RNA(n) + a ribonucleoside 5'-triphosphate = RNA(n+1) + diphosphate. DNA-dependent RNA polymerase catalyzes the transcription of DNA into RNA using the four ribonucleoside triphosphates as substrates. This chain is DNA-directed RNA polymerase subunit beta, found in Chlorobaculum tepidum (strain ATCC 49652 / DSM 12025 / NBRC 103806 / TLS) (Chlorobium tepidum).